The sequence spans 272 residues: Shikimate dehydrogenase (NADP(+)) (272 aa).

Shikimate-binding positions include 14 to 16 (SLS) and Thr61. Lys65 (proton acceptor) is an active-site residue. Asp102 contributes to the shikimate binding site. Residues 127–131 (GAGGA), 151–156 (NRTPSK), and Leu215 contribute to the NADP(+) site. Tyr217 lines the shikimate pocket. NADP(+) is bound at residue Gly239.

Belongs to the shikimate dehydrogenase family. In terms of assembly, homodimer.

It carries out the reaction shikimate + NADP(+) = 3-dehydroshikimate + NADPH + H(+). It participates in metabolic intermediate biosynthesis; chorismate biosynthesis; chorismate from D-erythrose 4-phosphate and phosphoenolpyruvate: step 4/7. In terms of biological role, involved in the biosynthesis of the chorismate, which leads to the biosynthesis of aromatic amino acids. Catalyzes the reversible NADPH linked reduction of 3-dehydroshikimate (DHSA) to yield shikimate (SA). The protein is Shikimate dehydrogenase (NADP(+)) of Coxiella burnetii (strain CbuG_Q212) (Coxiella burnetii (strain Q212)).